We begin with the raw amino-acid sequence, 675 residues long: DNA ligase (675 aa).

Residues 35–39, 84–85, and Glu-118 each bind NAD(+); these read DAVYD and SL. Lys-120 (N6-AMP-lysine intermediate) is an active-site residue. Positions 141, 178, 295, and 319 each coordinate NAD(+). Residues Cys-413, Cys-416, Cys-431, and Cys-436 each coordinate Zn(2+). One can recognise a BRCT domain in the interval 598 to 675; the sequence is GAIGALTGQT…DEAELKALLS (78 aa).

It belongs to the NAD-dependent DNA ligase family. LigA subfamily. Mg(2+) is required as a cofactor. Requires Mn(2+) as cofactor.

It catalyses the reaction NAD(+) + (deoxyribonucleotide)n-3'-hydroxyl + 5'-phospho-(deoxyribonucleotide)m = (deoxyribonucleotide)n+m + AMP + beta-nicotinamide D-nucleotide.. DNA ligase that catalyzes the formation of phosphodiester linkages between 5'-phosphoryl and 3'-hydroxyl groups in double-stranded DNA using NAD as a coenzyme and as the energy source for the reaction. It is essential for DNA replication and repair of damaged DNA. This chain is DNA ligase, found in Synechococcus sp. (strain RCC307).